Here is a 386-residue protein sequence, read N- to C-terminus: Phosphomevalonate dehydratase large subunit (386 aa).

Glycine 48, valine 49, serine 50, asparagine 53, arginine 63, asparagine 79, and proline 80 together coordinate (R)-5-phosphomevalonate. A [4Fe-4S] cluster-binding site is contributed by cysteine 110. Glutamate 129 and serine 130 together coordinate (R)-5-phosphomevalonate. Residues cysteine 283 and cysteine 342 each contribute to the [4Fe-4S] cluster site. Lysine 361 is a binding site for (R)-5-phosphomevalonate.

The protein belongs to the AcnX type II large subunit family. In terms of assembly, heterodimer composed of a large subunit (PMDh-L) and a small subunit (PMDh-S). It depends on [4Fe-4S] cluster as a cofactor.

It catalyses the reaction (R)-5-phosphomevalonate = (2E)-3-methyl-5-phosphooxypent-2-enoate + H2O. It functions in the pathway isoprenoid biosynthesis; isopentenyl diphosphate biosynthesis via mevalonate pathway. Its function is as follows. Component of a hydro-lyase that catalyzes the dehydration of mevalonate 5-phosphate (MVA5P) to form trans-anhydromevalonate 5-phosphate (tAHMP). Involved in the archaeal mevalonate (MVA) pathway, which provides fundamental precursors for isoprenoid biosynthesis, such as isopentenyl diphosphate (IPP) and dimethylallyl diphosphate (DMAPP). In Thermococcus kodakarensis (strain ATCC BAA-918 / JCM 12380 / KOD1) (Pyrococcus kodakaraensis (strain KOD1)), this protein is Phosphomevalonate dehydratase large subunit.